Reading from the N-terminus, the 575-residue chain is uncharacterized protein (575 aa).

An HTH marR-type domain is found at 1-120 (MKLIEHYVAL…YNMWLSEVFG (120 aa)). Positions 26-49 (LTEIADCLFCTERNAKLILHKLEN) form a DNA-binding region, H-T-H motif. Positions 176 to 490 (EPKPHLVHGW…FGFLHLLLSE (315 aa)) are solute-binding region.

This sequence in the C-terminal section; belongs to the bacterial solute-binding protein 5 family.

This is an uncharacterized protein from Bacillus subtilis (strain 168).